Here is a 592-residue protein sequence, read N- to C-terminus: Membrane protein insertase YidC (592 aa).

5 helical membrane passes run 8–28, 363–385, 430–450, 493–513, and 531–551; these read LFIALGLILVILTGYQMFVMG, ALGQFGLAILALTLMVKIVMFPL, INPLAGCLPILPQIPIFFALY, IWLIGGVLGIGAWPIIMGLTM, and IFAFLPIVFTFILAPFAAGLV.

It belongs to the OXA1/ALB3/YidC family. Type 1 subfamily. Interacts with the Sec translocase complex via SecD. Specifically interacts with transmembrane segments of nascent integral membrane proteins during membrane integration.

It is found in the cell inner membrane. Functionally, required for the insertion and/or proper folding and/or complex formation of integral membrane proteins into the membrane. Involved in integration of membrane proteins that insert both dependently and independently of the Sec translocase complex, as well as at least some lipoproteins. Aids folding of multispanning membrane proteins. The sequence is that of Membrane protein insertase YidC from Maricaulis maris (strain MCS10) (Caulobacter maris).